Here is a 172-residue protein sequence, read N- to C-terminus: Translation initiation factor IF-3 (172 aa).

Belongs to the IF-3 family. As to quaternary structure, monomer.

It is found in the cytoplasm. Its function is as follows. IF-3 binds to the 30S ribosomal subunit and shifts the equilibrium between 70S ribosomes and their 50S and 30S subunits in favor of the free subunits, thus enhancing the availability of 30S subunits on which protein synthesis initiation begins. The protein is Translation initiation factor IF-3 of Lactobacillus johnsonii (strain CNCM I-12250 / La1 / NCC 533).